The sequence spans 86 residues: Large ribosomal subunit protein eL31 (86 aa).

It belongs to the eukaryotic ribosomal protein eL31 family.

In Methanopyrus kandleri (strain AV19 / DSM 6324 / JCM 9639 / NBRC 100938), this protein is Large ribosomal subunit protein eL31.